The following is a 465-amino-acid chain: UDP-N-acetylmuramoylalanine--D-glutamate ligase (465 aa).

Residue 112–118 participates in ATP binding; the sequence is GTDGKTT.

The protein belongs to the MurCDEF family.

Its subcellular location is the cytoplasm. It carries out the reaction UDP-N-acetyl-alpha-D-muramoyl-L-alanine + D-glutamate + ATP = UDP-N-acetyl-alpha-D-muramoyl-L-alanyl-D-glutamate + ADP + phosphate + H(+). It participates in cell wall biogenesis; peptidoglycan biosynthesis. Functionally, cell wall formation. Catalyzes the addition of glutamate to the nucleotide precursor UDP-N-acetylmuramoyl-L-alanine (UMA). The protein is UDP-N-acetylmuramoylalanine--D-glutamate ligase of Chlorobium limicola (strain DSM 245 / NBRC 103803 / 6330).